The following is a 253-amino-acid chain: Small ribosomal subunit protein uS3 (253 aa).

A KH type-2 domain is found at 39 to 109; the sequence is IRNYVLARLK…EVKIDVVEVI (71 aa). Residues 220-253 are disordered; it reads DEMKKMKDRRNDGGAKGRDSRDNRSKRRSRSKRS. The segment covering 221–242 has biased composition (basic and acidic residues); it reads EMKKMKDRRNDGGAKGRDSRDN. Basic residues predominate over residues 243-253; it reads RSKRRSRSKRS.

Belongs to the universal ribosomal protein uS3 family. As to quaternary structure, part of the 30S ribosomal subunit. Forms a tight complex with proteins S10 and S14.

In terms of biological role, binds the lower part of the 30S subunit head. Binds mRNA in the 70S ribosome, positioning it for translation. In Chlorobium chlorochromatii (strain CaD3), this protein is Small ribosomal subunit protein uS3.